Here is a 481-residue protein sequence, read N- to C-terminus: Aspartyl/glutamyl-tRNA(Asn/Gln) amidotransferase subunit B (481 aa).

Belongs to the GatB/GatE family. GatB subfamily. Heterotrimer of A, B and C subunits.

The enzyme catalyses L-glutamyl-tRNA(Gln) + L-glutamine + ATP + H2O = L-glutaminyl-tRNA(Gln) + L-glutamate + ADP + phosphate + H(+). It carries out the reaction L-aspartyl-tRNA(Asn) + L-glutamine + ATP + H2O = L-asparaginyl-tRNA(Asn) + L-glutamate + ADP + phosphate + 2 H(+). Its function is as follows. Allows the formation of correctly charged Asn-tRNA(Asn) or Gln-tRNA(Gln) through the transamidation of misacylated Asp-tRNA(Asn) or Glu-tRNA(Gln) in organisms which lack either or both of asparaginyl-tRNA or glutaminyl-tRNA synthetases. The reaction takes place in the presence of glutamine and ATP through an activated phospho-Asp-tRNA(Asn) or phospho-Glu-tRNA(Gln). This Pseudomonas putida (strain W619) protein is Aspartyl/glutamyl-tRNA(Asn/Gln) amidotransferase subunit B.